The chain runs to 220 residues: Artemin (220 aa).

The first 39 residues, 1–39, serve as a signal peptide directing secretion; the sequence is MELGLGGLSTLSHCPWPRQQPALWPTLAALALLSSVAEA. The propeptide occupies 40–107; sequence SLGSAPRSPA…ALPRGGRAAR (68 aa). A disordered region spans residues 41–121; that stretch reads LGSAPRSPAP…GSRARAAGAR (81 aa). 2 stretches are compositionally biased toward pro residues: residues 47–58 and 81–98; these read SPAPREGPPPVL and PPPQ…PPSA. The segment covering 99–121 has biased composition (low complexity); sequence LPRGGRAARAGGPGSRARAAGAR. 3 disulfides stabilise this stretch: Cys-123-Cys-188, Cys-150-Cys-216, and Cys-154-Cys-218. The N-linked (GlcNAc...) asparagine glycan is linked to Asn-202.

This sequence belongs to the TGF-beta family. GDNF subfamily. As to quaternary structure, homodimer; disulfide-linked. Interacts with GFRA3 coreceptor and RET: forms a 2:2:2 ternary complex composed of ARTN ligand, GFRA3 and RET receptor. In terms of tissue distribution, ubiquitous. Expressed at high levels in peripheral tissues including prostate, placenta, pancreas, heart, kidney, pituitary gland, lung and testis. Expressed at low levels in the brain.

The protein resides in the secreted. In terms of biological role, growth factor that supports the survival of sensory and sympathetic peripheral neurons in culture and also supports the survival of dopaminergic neurons of the ventral mid-brain. Acts by binding to its coreceptor, GFRA3, leading to autophosphorylation and activation of the RET receptor. Strong attractant of gut hematopoietic cells thus promoting the formation Peyer's patch-like structures, a major component of the gut-associated lymphoid tissue. The chain is Artemin from Homo sapiens (Human).